The primary structure comprises 327 residues: Serpentine receptor class gamma-2 (327 aa).

The next 6 helical transmembrane spans lie at 35–55, 70–90, 157–177, 181–203, 244–264, and 277–297; these read LVQFVYLLPAAMLHARILYIL, ILFIMSCIACFTLVVQDIFFA, MKYAIALVILTPFLFIWNIII, LPVYTFGGFYIGYERVVIWATMT, IASFLISSCFLGTAAAESLFA, and FLLPISWDILNVGTPIVMVMA.

Belongs to the nematode receptor-like protein srg family.

The protein resides in the membrane. This is Serpentine receptor class gamma-2 (srg-2) from Caenorhabditis elegans.